Here is an 874-residue protein sequence, read N- to C-terminus: Breast cancer anti-estrogen resistance protein 1 (874 aa).

The residue at position 1 (Met1) is an N-acetylmethionine. Residues 3 to 65 (VPNVLAKALY…PGNRLKILVG (63 aa)) form the SH3 domain. The disordered stretch occupies residues 71–177 (PVGPGPGPPA…LYQVPPGPGS (107 aa)). Residues 73–88 (GPGPGPPATPPQPQPS) show a composition bias toward pro residues. A substrate for kinases region spans residues 119–420 (YLVPTPSKTQ…DGVYAVPPPA (302 aa)). Residue Tyr132 is modified to Phosphotyrosine. Polar residues predominate over residues 139–155 (PQFQSPPAKQTSTFSKQ). At Ser143 the chain carries Phosphoserine. Phosphotyrosine is present on residues Tyr238 and Tyr253. At Thr273 the chain carries Phosphothreonine. Phosphoserine is present on Ser296. Phosphotyrosine is present on residues Tyr366, Tyr376, and Tyr414. Residues 374–388 (DLYDVPPGLRRPGPG) show a composition bias toward low complexity. Disordered stretches follow at residues 374-394 (DLYD…YDVP), 409-450 (VDDG…SLEV), and 610-662 (RRTK…NSEG). Over residues 420–430 (AEREAPTDGKR) the composition is skewed to basic and acidic residues. The segment covering 431–448 (LSASSTGSTRSSQSASSL) has biased composition (low complexity). Ser432, Ser441, and Ser643 each carry phosphoserine. Polar residues predominate over residues 621-659 (GSSSLHPNPTDKASSIQSRPLPSPPKFTSQDSPDGQYEN). The SH3-binding motif lies at 639–647 (RPLPSPPKF). The tract at residues 750 to 800 (FYLEQCEANLTTLTDAVDAFFTAVATNQPPKIFVAHSKFVILSAHKLVFIG) is divergent helix-loop-helix motif.

The protein belongs to the CAS family. In terms of assembly, forms complexes in vivo with PTK2/FAK1, adapter protein CRKL and LYN kinase. Can heterodimerize with NEDD9. Component of a complex comprised of SH2D3C, BCAR1/CAS, and CRK. Within the complex, interacts with SH2D3C (via C-terminus), and CRK. Part of a complex comprised of PTPRA, BCAR1, BCAR3 (via SH2 domain) and SRC; the formation of the complex is dependent on integrin mediated-tyrosine phosphorylation of PTPRA. Interacts with BCAR3 (via Ras-GEF domain); the interaction regulates adhesion-dependent serine phosphorylation. Interacts with SMAD2 and SMAD3. Interacts with NPHP1. Interacts with PTK2B/PYK2. Interacts (via C-terminus) with SH2D3C/CHAT isoform 2 (via C-terminus). Interacts with activated CSPG4. Interacts with BMX, INPPL1/SHIP2 and PEAK1. Part of a collagen stimulated complex involved in cell migration composed of CDC42, CRK, TNK2 and BCAR1/p130cas. Interacts with TNK2 via SH3 domains. Interacts (when tyrosine-phosphorylated) with tensin TNS1; the interaction is increased by phosphorylation of TNS1. In terms of processing, PTK2/FAK1 activation mediates phosphorylation at the YDYVHL motif; phosphorylation is most likely catalyzed by SRC family members. SRC-family kinases are recruited to the phosphorylated sites and can phosphorylate other tyrosine residues. Tyrosine phosphorylation is triggered by integrin mediated adhesion of cells to the extracellular matrix. Post-translationally, dephosphorylated by PTPN14 at Tyr-132. Phosphorylated by SRC kinase in a EDN1- and PTK2B-mediated manner; phosphorylation strengthens its interaction with BCAR3 as part of the PTK2B/BCAR1/BCAR3/RAP1 signaling pathway. Expressed in olfactory sensory neurons (at protein level). Expressed abundantly in the liver, lung, brain, and at lower levels in the heart (at protein level).

It localises to the cell junction. It is found in the focal adhesion. The protein resides in the cytoplasm. The protein localises to the cell projection. Its subcellular location is the axon. Its function is as follows. Docking protein which plays a central coordinating role for tyrosine kinase-based signaling related to cell adhesion. Implicated in induction of cell migration and cell branching. Involved in the BCAR3-mediated inhibition of TGFB signaling. In Mus musculus (Mouse), this protein is Breast cancer anti-estrogen resistance protein 1 (Bcar1).